Reading from the N-terminus, the 497-residue chain is Dol-P-Man:Man(7)GlcNAc(2)-PP-Dol alpha-1,6-mannosyltransferase (497 aa).

The next 7 membrane-spanning stretches (helical) occupy residues 10 to 30 (FLQS…YVVM), 71 to 91 (FIGA…ISCL), 92 to 112 (GFPK…IILS), 125 to 145 (FGNQ…HFLF), 154 to 174 (ILAL…NFYP), 178 to 198 (FLIF…GPIG), and 215 to 235 (YCVG…SIMW). Asn253 carries an N-linked (GlcNAc...) asparagine glycan. The next 4 helical transmembrane spans lie at 263-285 (IHWY…SLLG), 292-312 (VPFF…LPHK), 316-336 (FIIS…SRIY), and 346-366 (LVNM…VVTF). Asn435 carries N-linked (GlcNAc...) asparagine glycosylation.

It belongs to the glycosyltransferase 22 family.

The protein localises to the endoplasmic reticulum membrane. It carries out the reaction an alpha-D-Man-(1-&gt;2)-alpha-D-Man-(1-&gt;2)-alpha-D-Man-(1-&gt;3)-[alpha-D-Man-(1-&gt;2)-alpha-D-Man-(1-&gt;3)-alpha-D-Man-(1-&gt;6)]-beta-D-Man-(1-&gt;4)-beta-D-GlcNAc-(1-&gt;4)-alpha-D-GlcNAc-diphospho-di-trans,poly-cis-dolichol + a di-trans,poly-cis-dolichyl beta-D-mannosyl phosphate = an alpha-D-Man-(1-&gt;2)-alpha-D-Man-(1-&gt;2)-alpha-D-Man-(1-&gt;3)-[alpha-D-Man-(1-&gt;2)-alpha-D-Man-(1-&gt;3)-[alpha-D-Man-(1-&gt;6)]-alpha-D-Man-(1-&gt;6)]-beta-D-Man-(1-&gt;4)-beta-D-GlcNAc-(1-&gt;4)-alpha-D-GlcNAc-diphospho-di-trans,poly-cis-dolichol + a di-trans,poly-cis-dolichyl phosphate + H(+). It functions in the pathway protein modification; protein glycosylation. Functionally, mannosyltransferase that operates in the biosynthetic pathway of dolichol-linked oligosaccharides, the glycan precursors employed in protein asparagine (N)-glycosylation. The assembly of dolichol-linked oligosaccharides begins on the cytosolic side of the endoplasmic reticulum membrane and finishes in its lumen. The sequential addition of sugars to dolichol pyrophosphate produces dolichol-linked oligosaccharides containing fourteen sugars, including two GlcNAcs, nine mannoses and three glucoses. Once assembled, the oligosaccharide is transferred from the lipid to nascent proteins by oligosaccharyltransferases. In the lumen of the endoplasmic reticulum, adds the eighth mannose residue in an alpha-1,6 linkage onto Man(7)GlcNAc(2)-PP-dolichol to produce Man(8)GlcNAc(2)-PP-dolichol. In Arabidopsis thaliana (Mouse-ear cress), this protein is Dol-P-Man:Man(7)GlcNAc(2)-PP-Dol alpha-1,6-mannosyltransferase (ALG12).